A 126-amino-acid chain; its full sequence is Glycine cleavage system H protein (126 aa).

Residues 20–102 (IGTIGITDYA…LGDGWFFKVR (83 aa)) form the Lipoyl-binding domain. Position 61 is an N6-lipoyllysine (Lys-61).

The protein belongs to the GcvH family. As to quaternary structure, the glycine cleavage system is composed of four proteins: P, T, L and H. Requires (R)-lipoate as cofactor.

Functionally, the glycine cleavage system catalyzes the degradation of glycine. The H protein shuttles the methylamine group of glycine from the P protein to the T protein. The chain is Glycine cleavage system H protein from Rhodospirillum rubrum (strain ATCC 11170 / ATH 1.1.1 / DSM 467 / LMG 4362 / NCIMB 8255 / S1).